The following is a 175-amino-acid chain: Di-N-acetylchitobiase (175 aa).

The signal sequence occupies residues 1–38 (MARLQLAGSRRLVPLPRRAPRLAPLLLPLLLALPDGAR). A GH18 domain is found at 39 to 175 (ADCPCKVPAL…SFHHEIKGSQ (137 aa)). Asn-115 carries an N-linked (GlcNAc...) asparagine glycan. Glu-143 serves as the catalytic Proton donor.

This sequence belongs to the glycosyl hydrolase 18 family.

It is found in the lysosome. Involved in the degradation of asparagine-linked glycoproteins. Hydrolyze of N-acetyl-beta-D-glucosamine (1-4)N-acetylglucosamine chitobiose core from the reducing end of the bond, it requires prior cleavage by glycosylasparaginase. In Bos taurus (Bovine), this protein is Di-N-acetylchitobiase (CTBS).